We begin with the raw amino-acid sequence, 39 residues long: DECANAAAQCSITLCNLYCGPLIEICELTVMQNCEPPFS.

3 disulfides stabilise this stretch: Cys-3-Cys-19, Cys-10-Cys-34, and Cys-15-Cys-26.

As to quaternary structure, homodimer.

The protein localises to the secreted. Mating ciliate pheromones (or gamones) are diffusible extracellular communication signals that distinguish different intraspecific classes of cells commonly referred to as 'mating types'. They prepare the latter for conjugation by changing their cell surface properties. This Euplotes raikovi protein is Mating pheromone Er-11 (MAT11).